Here is a 121-residue protein sequence, read N- to C-terminus: Large ribosomal subunit protein bL12 (121 aa).

Belongs to the bacterial ribosomal protein bL12 family. Homodimer. Part of the ribosomal stalk of the 50S ribosomal subunit. Forms a multimeric L10(L12)X complex, where L10 forms an elongated spine to which 2 to 4 L12 dimers bind in a sequential fashion. Binds GTP-bound translation factors.

Forms part of the ribosomal stalk which helps the ribosome interact with GTP-bound translation factors. Is thus essential for accurate translation. This is Large ribosomal subunit protein bL12 from Lactococcus lactis subsp. lactis (strain IL1403) (Streptococcus lactis).